The chain runs to 383 residues: Anhydro-N-acetylmuramic acid kinase (383 aa).

An ATP-binding site is contributed by 9–16; sequence GTSLDGID.

Belongs to the anhydro-N-acetylmuramic acid kinase family.

The catalysed reaction is 1,6-anhydro-N-acetyl-beta-muramate + ATP + H2O = N-acetyl-D-muramate 6-phosphate + ADP + H(+). Its pathway is amino-sugar metabolism; 1,6-anhydro-N-acetylmuramate degradation. The protein operates within cell wall biogenesis; peptidoglycan recycling. Catalyzes the specific phosphorylation of 1,6-anhydro-N-acetylmuramic acid (anhMurNAc) with the simultaneous cleavage of the 1,6-anhydro ring, generating MurNAc-6-P. Is required for the utilization of anhMurNAc either imported from the medium or derived from its own cell wall murein, and thus plays a role in cell wall recycling. The protein is Anhydro-N-acetylmuramic acid kinase of Clostridioides difficile (strain 630) (Peptoclostridium difficile).